A 609-amino-acid chain; its full sequence is Alpha-glycerophosphate oxidase (609 aa).

21 to 49 contacts FAD; it reads DLLVIGGGITGAGLTLQAAAAGMKVAVLE.

This sequence belongs to the FAD-dependent glycerol-3-phosphate dehydrogenase family. The cofactor is FAD.

The protein resides in the cytoplasm. The enzyme catalyses sn-glycerol 3-phosphate + O2 = dihydroxyacetone phosphate + H2O2. The protein is Alpha-glycerophosphate oxidase (glpO) of Lactococcus lactis subsp. lactis (strain IL1403) (Streptococcus lactis).